We begin with the raw amino-acid sequence, 340 residues long: UPF0324 membrane protein OB3406 (340 aa).

9 helical membrane passes run 12 to 31, 36 to 58, 94 to 116, 126 to 148, 155 to 177, 215 to 237, 257 to 276, 281 to 303, and 315 to 337; these read SFYTGIGITLAIALVAGVLC, LDIMGQLVLAIMIGMIWGHTIGL, GLHAFLYAGLLLTVALVTVYSLA, SILTACGTAICGAAAIVAIAPLV, TAVSVAVIAVLGTMFTLIYTMMY, IAIVVKLTRVALLVPVAILIGIY, IPWFIFGFLAMSAVNTIGFL, VNLLISLAYLLLSMAMAGLGLNV, and VFFAGLLGTLILIGCGFGLIYVM.

Belongs to the UPF0324 family.

The protein resides in the cell membrane. The chain is UPF0324 membrane protein OB3406 from Oceanobacillus iheyensis (strain DSM 14371 / CIP 107618 / JCM 11309 / KCTC 3954 / HTE831).